Here is a 92-residue protein sequence, read N- to C-terminus: Small ribosomal subunit protein uS19 (92 aa).

Belongs to the universal ribosomal protein uS19 family.

Functionally, protein S19 forms a complex with S13 that binds strongly to the 16S ribosomal RNA. This chain is Small ribosomal subunit protein uS19, found in Caulobacter vibrioides (strain ATCC 19089 / CIP 103742 / CB 15) (Caulobacter crescentus).